Here is a 527-residue protein sequence, read N- to C-terminus: ATP synthase subunit alpha (527 aa).

169 to 176 lines the ATP pocket; sequence GDRQTGKT.

This sequence belongs to the ATPase alpha/beta chains family. In terms of assembly, F-type ATPases have 2 components, CF(1) - the catalytic core - and CF(0) - the membrane proton channel. CF(1) has five subunits: alpha(3), beta(3), gamma(1), delta(1), epsilon(1). CF(0) has three main subunits: a(1), b(2) and c(9-12). The alpha and beta chains form an alternating ring which encloses part of the gamma chain. CF(1) is attached to CF(0) by a central stalk formed by the gamma and epsilon chains, while a peripheral stalk is formed by the delta and b chains.

The protein resides in the cell membrane. It carries out the reaction ATP + H2O + 4 H(+)(in) = ADP + phosphate + 5 H(+)(out). Functionally, produces ATP from ADP in the presence of a proton gradient across the membrane. The alpha chain is a regulatory subunit. The protein is ATP synthase subunit alpha of Metamycoplasma arthritidis (strain 158L3-1) (Mycoplasma arthritidis).